The following is a 225-amino-acid chain: UPF0758 protein SO_4248 (225 aa).

The MPN domain occupies 102–224 (VLTNPDLTRD…IVSFAERGWI (123 aa)). 3 residues coordinate Zn(2+): His-173, His-175, and Asp-186. The short motif at 173–186 (HNHPSGIAEPSQAD) is the JAMM motif element.

This sequence belongs to the UPF0758 family.

The chain is UPF0758 protein SO_4248 from Shewanella oneidensis (strain ATCC 700550 / JCM 31522 / CIP 106686 / LMG 19005 / NCIMB 14063 / MR-1).